The primary structure comprises 192 residues: Small ribosomal subunit protein uS4c-2 (192 aa).

The 65-residue stretch at 91 to 155 (TRLDHLVYRA…PKPPEYLPPY (65 aa)) folds into the S4 RNA-binding domain.

This sequence belongs to the universal ribosomal protein uS4 family. Part of the 30S ribosomal subunit. Contacts protein S5. The interaction surface between S4 and S5 is involved in control of translational fidelity.

The protein localises to the plastid. The protein resides in the chloroplast. One of the primary rRNA binding proteins, it binds directly to 16S rRNA where it nucleates assembly of the body of the 30S subunit. In terms of biological role, with S5 and S12 plays an important role in translational accuracy. The chain is Small ribosomal subunit protein uS4c-2 from Cyanidium caldarium (Red alga).